We begin with the raw amino-acid sequence, 195 residues long: ATP-dependent Clp protease proteolytic subunit (195 aa).

Catalysis depends on Ser-98, which acts as the Nucleophile. The active site involves His-123.

This sequence belongs to the peptidase S14 family. Fourteen ClpP subunits assemble into 2 heptameric rings which stack back to back to give a disk-like structure with a central cavity, resembling the structure of eukaryotic proteasomes.

The protein localises to the cytoplasm. It catalyses the reaction Hydrolysis of proteins to small peptides in the presence of ATP and magnesium. alpha-casein is the usual test substrate. In the absence of ATP, only oligopeptides shorter than five residues are hydrolyzed (such as succinyl-Leu-Tyr-|-NHMec, and Leu-Tyr-Leu-|-Tyr-Trp, in which cleavage of the -Tyr-|-Leu- and -Tyr-|-Trp bonds also occurs).. Cleaves peptides in various proteins in a process that requires ATP hydrolysis. Has a chymotrypsin-like activity. Plays a major role in the degradation of misfolded proteins. The protein is ATP-dependent Clp protease proteolytic subunit of Staphylococcus haemolyticus (strain JCSC1435).